The following is a 98-amino-acid chain: MRTLTLLTALLLLALQVQTQSLEETADQVPAQDQPGAEAQDITISFAGDERSAREASKSLIGTASCTCRRAWICRWGERHSGKCIDQKGSTYRLCCRR.

Residues 1 to 19 (MRTLTLLTALLLLALQVQT) form the signal peptide. The propeptide occupies 20–63 (QSLEETADQVPAQDQPGAEAQDITISFAGDERSAREASKSLIGT). Cystine bridges form between Cys66–Cys96, Cys68–Cys84, and Cys74–Cys95.

This sequence belongs to the alpha-defensin family. As to expression, paneth cells of the small bowel.

Its subcellular location is the secreted. Has broad-spectrum antimicrobial properties. The antimicrobial activity decreases in the present of salt in vitro. Binds anionic phospholipids, which leads to the aggregation of liposomes in vitro. Membrane permeabilization of the target cells is an essential part of the peptide's mode of antimicrobial activity. No hemolytic activity against sheep or horse erythrocytes. Has antibacterial activity against the bacterial horse pathogens Gram-positive R.equi ATCC 33701 P(-) (minimum bactericidal concentration or MBC=5 ug/ml) and R.equi ATCC 33701 P(+) (MBC=5 ug/ml), which are resistant against beta-lactam antibiotics. Also has antibacterial activity against highly infectious wild-type strain R.equi 85F P(+) (MBC=5 ug/ml), S.equi subsp. equi (MBC=5 ug/ml), S.equi subsp. zooepidemicus (MBC=5 ug/ml), S.dysgalactiae subsp. equisimilis (MBC=10 ug/ml), S.choleraesuis subsp. choleraesuis serovar Typhimurium (MBC=10 ug/ml), and P.multocida subsp. multocida (MBC=&gt;10 ug/ml). Probably contributes to the antimicrobial barrier function of the small bowel mucosa. This chain is Alpha-defensin 1, found in Equus caballus (Horse).